A 232-amino-acid polypeptide reads, in one-letter code: Clarin-1 (232 aa).

The helical transmembrane segment at 8–28 (IIFCMAGVFSFACALGVVTAL) threads the bilayer. Residue Asn48 is glycosylated (N-linked (GlcNAc...) asparagine). A run of 2 helical transmembrane segments spans residues 101–121 (IILF…FFMY) and 135–155 (LGLY…MILF). Asn184 carries N-linked (GlcNAc...) asparagine glycosylation. The chain crosses the membrane as a helical span at residues 186 to 206 (TTSFWVVFICFFVHFLNGLLI).

This sequence belongs to the clarin family.

The protein localises to the cell membrane. May have a role in the excitatory ribbon synapse junctions between hair cells and cochlear ganglion cells and presumably also in analogous synapses within the retina. The chain is Clarin-1 (Clrn1) from Rattus norvegicus (Rat).